We begin with the raw amino-acid sequence, 196 residues long: Ribonuclease HII (196 aa).

The RNase H type-2 domain occupies Lys9–Glu196. A divalent metal cation is bound by residues Asp15, Glu16, and Asp107.

This sequence belongs to the RNase HII family. It depends on Mn(2+) as a cofactor. The cofactor is Mg(2+).

Its subcellular location is the cytoplasm. It catalyses the reaction Endonucleolytic cleavage to 5'-phosphomonoester.. In terms of biological role, endonuclease that specifically degrades the RNA of RNA-DNA hybrids. This is Ribonuclease HII from Aeromonas salmonicida (strain A449).